The chain runs to 255 residues: Tablysin 15 (255 aa).

The signal sequence occupies residues 1–23; it reads MTSIPVSSFLLAALVLQYATSDA. Cystine bridges form between Cys-27/Cys-40, Cys-31/Cys-117, and Cys-49/Cys-110. The Cell attachment site signature appears at 32–34; the sequence is RGD. The 145-residue stretch at 67–211 folds into the SCP domain; that stretch reads LSKINDVRDH…KARALLTCNF (145 aa). Leukotriene E4 contacts are provided by Trp-82, His-153, and Lys-156. 2 disulfides stabilise this stretch: Cys-192–Cys-209 and Cys-232–Cys-243.

The protein belongs to the CRISP family. Expressed in salivary glands.

It is found in the secreted. Functionally, anti-inflammatory scavenger of eicosanoids and antithrombotic protein that inhibits platelets aggregation induced by collagen, ADP and convulxin (GPVI agonist). Exhibits high affinity binding for glycoprotein IIb-IIIa receptor (ITGA2B/ITGB3) and endothelial cell alphaVbeta3 (ITGAV/ITGB3) integrins, but not for alpha-5/beta-1 or alpha-2/beta-1. Accordingly, it blocks endothelial cell adhesion to vitronectin (IC(50)~1 nM) and marginally to fibronectin (IC(50)~1 uM), but not to collagen. It also inhibits fibroblast growth factor (FGF)-induced endothelial cell proliferation, and attenuates tube formation in vitro. In addition, it dose-dependently attenuates thrombus formation to collagen under flow. Also binds proinflammatory cysteinyl leukotrienes (leukotrienes C4 (LTC4), D4 (LTD4) and E4 (LTE4)) with submicromolar affinities. The polypeptide is Tablysin 15 (Tabanus yao (Horsefly)).